Consider the following 195-residue polypeptide: METIVLGVEPRVIKKNEAEKLRKSGLVPAVVYHKGEETVAVSIQELALTKLVHSAESHIIDLQFPDGKLKRSFIKEVQFHPVTDRIIHADFQLFSADEIVEMVVPVSVSGESVGVEKGGKLQIIMHSLTLKGKPTDMPEHFVIDITALDLAHSIHVREIPMTNYPGLTIMDEPDAPVITVLATRKEVEAAAEVAS.

It belongs to the bacterial ribosomal protein bL25 family. CTC subfamily. In terms of assembly, part of the 50S ribosomal subunit; part of the 5S rRNA/L5/L18/L25 subcomplex. Contacts the 5S rRNA. Binds to the 5S rRNA independently of L5 and L18.

In terms of biological role, this is one of the proteins that binds to the 5S RNA in the ribosome where it forms part of the central protuberance. The chain is Large ribosomal subunit protein bL25 from Chlorobium chlorochromatii (strain CaD3).